Here is a 504-residue protein sequence, read N- to C-terminus: Amidophosphoribosyltransferase (504 aa).

Cys-2 (nucleophile) is an active-site residue. One can recognise a Glutamine amidotransferase type-2 domain in the interval 2-235; the sequence is CGIVGIVSQS…PGEAIYVTFE (234 aa). Residues Thr-305, Asp-367, and Asp-368 each contribute to the Mg(2+) site.

The protein in the C-terminal section; belongs to the purine/pyrimidine phosphoribosyltransferase family. Requires Mg(2+) as cofactor.

The enzyme catalyses 5-phospho-beta-D-ribosylamine + L-glutamate + diphosphate = 5-phospho-alpha-D-ribose 1-diphosphate + L-glutamine + H2O. Its pathway is purine metabolism; IMP biosynthesis via de novo pathway; N(1)-(5-phospho-D-ribosyl)glycinamide from 5-phospho-alpha-D-ribose 1-diphosphate: step 1/2. Its function is as follows. Catalyzes the formation of phosphoribosylamine from phosphoribosylpyrophosphate (PRPP) and glutamine. The protein is Amidophosphoribosyltransferase of Pasteurella multocida (strain Pm70).